Here is a 251-residue protein sequence, read N- to C-terminus: MELSAIGEQVFAVESIRKKRVRKGKVEYLVKWKGWPPKYSTWEPEEHILDPRLVMAYEEKEERDRASGYRKRGPKPKRLLLQRLYSMDLRSSHKAKGKEKLCFSLTCPLGSGSPEGVVKAGAPELVDKGPLVPTLPFPLRKPRKAHKYLRLSRKKFPPRGPNLESHSHRRELFLQEPPAPDVLQAAGEWEPAAQPPEEEADADLAEGPPPWTPALPSSEVTVTDITANSITVTFREAQAAEGFFRDRSGKF.

A Chromo domain is found at 11 to 69; the sequence is FAVESIRKKRVRKGKVEYLVKWKGWPPKYSTWEPEEHILDPRLVMAYEEKEERDRASGY. Positions 190 to 220 are disordered; sequence EPAAQPPEEEADADLAEGPPPWTPALPSSEV. The required for cellular lifespan extension stretch occupies residues 223-236; it reads TDITANSITVTFRE.

In terms of assembly, component of a PRC1-like complex. Interacts with RING1 and RNF2/RING1B, but not with BMI1, EED or EZH2. Interacts with PCGF1, PCGF2, PCGF3, PCGF5 and PCGF6.

It is found in the nucleus. Its function is as follows. Component of a Polycomb group (PcG) multiprotein PRC1-like complex, a complex class required to maintain the transcriptionally repressive state of many genes, including Hox genes, throughout development. PcG PRC1 complex acts via chromatin remodeling and modification of histones; it mediates monoubiquitination of histone H2A 'Lys-119', rendering chromatin heritably changed in its expressibility. Promotes histone H3 trimethylation at 'Lys-9' (H3K9me3). Binds to trimethylated lysine residues in histones, and possibly also other proteins. Regulator of cellular lifespan by maintaining the repression of CDKN2A, but not by inducing telomerase activity. This Homo sapiens (Human) protein is Chromobox protein homolog 7 (CBX7).